Here is a 349-residue protein sequence, read N- to C-terminus: Deoxyguanosinetriphosphate triphosphohydrolase-like protein (349 aa).

The 118-residue stretch at 80–197 (RLTHTLEVAQ…VKYSDKIAYV (118 aa)) folds into the HD domain.

Belongs to the dGTPase family. Type 2 subfamily.

This is Deoxyguanosinetriphosphate triphosphohydrolase-like protein from Clostridium tetani (strain Massachusetts / E88).